Here is a 280-residue protein sequence, read N- to C-terminus: Bifunctional protein FolD (280 aa).

NADP(+)-binding positions include 158–160 (GES), Ile-183, and Ile-222.

The protein belongs to the tetrahydrofolate dehydrogenase/cyclohydrolase family. As to quaternary structure, homodimer.

The enzyme catalyses (6R)-5,10-methylene-5,6,7,8-tetrahydrofolate + NADP(+) = (6R)-5,10-methenyltetrahydrofolate + NADPH. It catalyses the reaction (6R)-5,10-methenyltetrahydrofolate + H2O = (6R)-10-formyltetrahydrofolate + H(+). It functions in the pathway one-carbon metabolism; tetrahydrofolate interconversion. Catalyzes the oxidation of 5,10-methylenetetrahydrofolate to 5,10-methenyltetrahydrofolate and then the hydrolysis of 5,10-methenyltetrahydrofolate to 10-formyltetrahydrofolate. In Mycoplasma mobile (strain ATCC 43663 / 163K / NCTC 11711) (Mesomycoplasma mobile), this protein is Bifunctional protein FolD.